A 431-amino-acid polypeptide reads, in one-letter code: Cyclin-B2-4 (431 aa).

The disordered stretch occupies residues 1–30 (MGGSDENRHGVIGPMNRQQGGLRGGKVIPT).

Belongs to the cyclin family. Cyclin AB subfamily. Interacts with SMR11.

This Arabidopsis thaliana (Mouse-ear cress) protein is Cyclin-B2-4 (CYCB2-4).